The sequence spans 798 residues: Tripartite terminase subunit 1 (798 aa).

The segment at 191-219 (CFQCYEELMAVPNQGRSINRRMQGLLCDH) adopts a C3H1-type zinc-finger fold. Residues 416-429 (AAGAARSRAEAASG) are compositionally biased toward low complexity. Positions 416–458 (AAGAARSRAEAASGAGAGGEEGAGAAAGRGNTGGDEGAGTTTA) are disordered. Positions 430-452 (AGAGGEEGAGAAAGRGNTGGDEG) are enriched in gly residues. 674–681 (YNETFGKQ) is an ATP binding site.

Belongs to the herpesviridae TRM1 protein family. In terms of assembly, associates with TRM2 and TRM3 to form the tripartite terminase complex. Interacts with portal protein.

The protein localises to the host nucleus. Its function is as follows. Component of the molecular motor that translocates viral genomic DNA in empty capsid during DNA packaging. Forms a tripartite terminase complex together with TRM2 and TRM3 in the host cytoplasm. Once the complex reaches the host nucleus, it interacts with the capsid portal vertex. This portal forms a ring in which genomic DNA is translocated into the capsid. TRM1 carries an endonuclease activity that plays an important role for the cleavage of concatemeric viral DNA into unit length genomes. In Murid herpesvirus 1 (strain Smith) (MuHV-1), this protein is Tripartite terminase subunit 1.